The sequence spans 496 residues: FAD-linked oxidoreductase AFUA_1G00980 (496 aa).

Residues 1-21 (MRRATLIPLAIWVAGAAAAAA) form the signal peptide. Residues Asn-49, Asn-122, Asn-205, Asn-258, Asn-344, Asn-351, Asn-371, and Asn-382 are each glycosylated (N-linked (GlcNAc...) asparagine). The 180-residue stretch at 64-243 (MAPTYAVSVR…VEAVYQVTDL (180 aa)) folds into the FAD-binding PCMH-type domain.

It belongs to the oxygen-dependent FAD-linked oxidoreductase family. It depends on FAD as a cofactor.

FAD-linked oxidoreductase; part of the gene cluster that mediates the biosynthesis of fumigermin that inhibits germination of spores of the inducing S.rapamycinicus, and thus helps the fungus to defend resources in the shared habitat against a bacterial competitor. The partially reducing polyketide synthase fngA alone is sufficient for the production of fumigermin. FgnA catalyzes the condensation of 3 malonyl-CoA units to an acetyl-CoA starter, and 3 methylations to yield fumigermin. It is remarkable that the five cluster genes including fgnA are conserved in distantly related fungi, supporting the assumption of a fumigermin cluster; it is thus possible that originally all five genes were functional, but that the genes encoding tailoring enzymes became inactive from mutations, similar to the case of the fgnA gene in strains A1163 and Af293. The polypeptide is FAD-linked oxidoreductase AFUA_1G00980 (Aspergillus fumigatus (strain ATCC MYA-4609 / CBS 101355 / FGSC A1100 / Af293) (Neosartorya fumigata)).